A 730-amino-acid chain; its full sequence is Neuroligin-like protein glit-1 (730 aa).

The first 18 residues, 1 to 18 (MFTGTIFNSLFTLPLVIS), serve as a signal peptide directing secretion. Topologically, residues 19–663 (QFVPPPTRPV…EIMVFKWITG (645 aa)) are extracellular. Asn103, Asn320, Asn445, Asn512, Asn557, Asn564, and Asn604 each carry an N-linked (GlcNAc...) asparagine glycan. Residues 664–684 (VNVIIIALLIVLAGAFGYMVW) traverse the membrane as a helical segment. Residues 685-730 (GNKEDEEAAYKAENHQLVEYRDTGHSVSDATISSRTRSPRSRITNL) lie on the Cytoplasmic side of the membrane.

It belongs to the type-B carboxylesterase/lipase family. In terms of tissue distribution, expressed in the pharynx, intestine, and in several cells in the head including dopaminergic neurons.

It is found in the cell membrane. In terms of biological role, probable neuronal cell surface protein thought to be involved in cell-cell-interactions. Confers protection against oxidative stress. Plays a role in protecting dopaminergic neurons against oxidative stress-induced neurodegeneration. The protein is Neuroligin-like protein glit-1 of Caenorhabditis elegans.